Reading from the N-terminus, the 463-residue chain is Cysteine--tRNA ligase (463 aa).

Cys29 is a binding site for Zn(2+). The 'HIGH' region motif lies at Ala31–His41. Cys212, His237, and Glu241 together coordinate Zn(2+). The 'KMSKS' region signature appears at Lys268–Ser272. Lys271 lines the ATP pocket.

The protein belongs to the class-I aminoacyl-tRNA synthetase family. In terms of assembly, monomer. Zn(2+) serves as cofactor.

It is found in the cytoplasm. It carries out the reaction tRNA(Cys) + L-cysteine + ATP = L-cysteinyl-tRNA(Cys) + AMP + diphosphate. This chain is Cysteine--tRNA ligase, found in Corynebacterium diphtheriae (strain ATCC 700971 / NCTC 13129 / Biotype gravis).